A 415-amino-acid polypeptide reads, in one-letter code: tRNA(Ile2) 2-agmatinylcytidine synthetase TiaS (415 aa).

Belongs to the TiaS family.

It localises to the cytoplasm. It carries out the reaction cytidine(34) in tRNA(Ile2) + agmatine + ATP + H2O = 2-agmatinylcytidine(34) in tRNA(Ile2) + AMP + 2 phosphate + 2 H(+). In terms of biological role, ATP-dependent agmatine transferase that catalyzes the formation of 2-agmatinylcytidine (agm2C) at the wobble position (C34) of tRNA(Ile2), converting the codon specificity from AUG to AUA. This is tRNA(Ile2) 2-agmatinylcytidine synthetase TiaS from Methanocorpusculum labreanum (strain ATCC 43576 / DSM 4855 / Z).